The primary structure comprises 507 residues: Probable DNA ligase (507 aa).

E209 lines the ATP pocket. Catalysis depends on K211, which acts as the N6-AMP-lysine intermediate. 6 residues coordinate ATP: R216, R231, E260, F295, R366, and K372.

It belongs to the ATP-dependent DNA ligase family. Mg(2+) serves as cofactor.

The catalysed reaction is ATP + (deoxyribonucleotide)n-3'-hydroxyl + 5'-phospho-(deoxyribonucleotide)m = (deoxyribonucleotide)n+m + AMP + diphosphate.. In terms of biological role, DNA ligase that seals nicks in double-stranded DNA during DNA replication, DNA recombination and DNA repair. This chain is Probable DNA ligase, found in Pseudarthrobacter chlorophenolicus (strain ATCC 700700 / DSM 12829 / CIP 107037 / JCM 12360 / KCTC 9906 / NCIMB 13794 / A6) (Arthrobacter chlorophenolicus).